Consider the following 139-residue polypeptide: MIIGIGSDLIDIRRIENSLQRFGERFVNRCFTDIEIAKSEGRKNRAASYAKRFAAKEACSKALGTGLAQGVFWKDMGVVNLPGGKPTMQLTGGAAARLQEMLPVGHRAAIHLTITDDFPLAQAFVIIEALPVAPAEGTV.

Mg(2+) contacts are provided by Asp-8 and Glu-57.

Belongs to the P-Pant transferase superfamily. AcpS family. It depends on Mg(2+) as a cofactor.

It is found in the cytoplasm. It carries out the reaction apo-[ACP] + CoA = holo-[ACP] + adenosine 3',5'-bisphosphate + H(+). Functionally, transfers the 4'-phosphopantetheine moiety from coenzyme A to a Ser of acyl-carrier-protein. The polypeptide is Holo-[acyl-carrier-protein] synthase (Rhizobium meliloti (strain 1021) (Ensifer meliloti)).